A 202-amino-acid polypeptide reads, in one-letter code: Glycerol-3-phosphate acyltransferase (202 aa).

Transmembrane regions (helical) follow at residues 3–23 (NLIIYAFIYLLGSISFGLILT), 61–81 (IATIILDFAKAAIPLLILKFL), 87–107 (LLWSVAVLAIFGHCFSIYLLF), 117–137 (AGAMIVLLPLEVLTAFIVWAV), 144–164 (ISSLASLAALLAFIVSSFIFN), and 167–187 (LEIHTHAPVFIIAFIIVYKHL).

This sequence belongs to the PlsY family. In terms of assembly, probably interacts with PlsX.

The protein resides in the cell inner membrane. The enzyme catalyses an acyl phosphate + sn-glycerol 3-phosphate = a 1-acyl-sn-glycero-3-phosphate + phosphate. Its pathway is lipid metabolism; phospholipid metabolism. In terms of biological role, catalyzes the transfer of an acyl group from acyl-phosphate (acyl-PO(4)) to glycerol-3-phosphate (G3P) to form lysophosphatidic acid (LPA). This enzyme utilizes acyl-phosphate as fatty acyl donor, but not acyl-CoA or acyl-ACP. This chain is Glycerol-3-phosphate acyltransferase, found in Campylobacter jejuni subsp. doylei (strain ATCC BAA-1458 / RM4099 / 269.97).